The chain runs to 723 residues: ESX-1 secretion-associated protein EspK (723 aa).

Disordered regions lie at residues 175–360 (DLLQ…TPAA) and 393–451 (SGAG…GTPV). A compositionally biased stretch (low complexity) spans 200–209 (TPGTPITPGT). Positions 210–229 (PITPIPGAPVTPITPTPGTP) are enriched in pro residues. Residues 230 to 249 (VTPVTPGKPVTPVTPVKPGT) are compositionally biased toward low complexity. Composition is skewed to pro residues over residues 250 to 265 (PGEPTPITPVTPPVAP) and 274 to 308 (PVTPAPAPHPQPAPAPAPSPGPQPVTPATPGPSGP). 3 stretches are compositionally biased toward low complexity: residues 309 to 319 (ATPGTPGGEPA), 393 to 404 (SGAGSHAATGRA), and 412 to 426 (AAAPSTRAASARTAP). Basic and acidic residues predominate over residues 432 to 444 (STDHIDKPDRSES).

Its subcellular location is the cytoplasm. Its function is as follows. May act as a chaperone that facilitates EspB secretion through an interaction with EccCb1. The sequence is that of ESX-1 secretion-associated protein EspK from Mycobacterium tuberculosis (strain CDC 1551 / Oshkosh).